Reading from the N-terminus, the 104-residue chain is Phosphoribosyl-ATP pyrophosphatase (104 aa).

It belongs to the PRA-PH family.

The protein resides in the cytoplasm. The catalysed reaction is 1-(5-phospho-beta-D-ribosyl)-ATP + H2O = 1-(5-phospho-beta-D-ribosyl)-5'-AMP + diphosphate + H(+). It functions in the pathway amino-acid biosynthesis; L-histidine biosynthesis; L-histidine from 5-phospho-alpha-D-ribose 1-diphosphate: step 2/9. The polypeptide is Phosphoribosyl-ATP pyrophosphatase (Rhizobium rhizogenes (strain K84 / ATCC BAA-868) (Agrobacterium radiobacter)).